Here is a 324-residue protein sequence, read N- to C-terminus: MQVSLMANFIELKEATTNPDYGCPPAERDIEAHISMGVVNLDKPSGPTSHQVDSWVRDMLHVEKVGHGGTLDPKVTGVLPLGIDRATRVMQLLLEAPKEYVCLMRVHREVDEERIREVLGEFQGKIFQIPPLKSAVKRDLRVRTIYRVDILEVDGQDVLFRIACEAGTYVRKYCHDVGEALGAGAHMAELRRTAVGPFTEEGLVTLHDLKDAYQFWVEDGDETFLRECILPMEFAVGHLPRVVILDSAVDAICHGADLARGGIAGLDDNIAWGDTVAIMTLKGELVGVGEASMSALDIAAADGGLVIETRKVFMEPGTYPRMWR.

The Nucleophile role is filled by D72. In terms of domain architecture, PUA spans 239–314 (LPRVVILDSA…LVIETRKVFM (76 aa)).

Belongs to the pseudouridine synthase TruB family. Type 2 subfamily.

The enzyme catalyses uridine(55) in tRNA = pseudouridine(55) in tRNA. Its function is as follows. Could be responsible for synthesis of pseudouridine from uracil-55 in the psi GC loop of transfer RNAs. The polypeptide is Probable tRNA pseudouridine synthase B (Methanothermobacter thermautotrophicus (strain ATCC 29096 / DSM 1053 / JCM 10044 / NBRC 100330 / Delta H) (Methanobacterium thermoautotrophicum)).